Consider the following 156-residue polypeptide: ATP synthase subunit b (156 aa).

The chain crosses the membrane as a helical span at residues 7–26 (LIGQAIWFALFIWITMKYVW).

This sequence belongs to the ATPase B chain family. In terms of assembly, F-type ATPases have 2 components, F(1) - the catalytic core - and F(0) - the membrane proton channel. F(1) has five subunits: alpha(3), beta(3), gamma(1), delta(1), epsilon(1). F(0) has three main subunits: a(1), b(2) and c(10-14). The alpha and beta chains form an alternating ring which encloses part of the gamma chain. F(1) is attached to F(0) by a central stalk formed by the gamma and epsilon chains, while a peripheral stalk is formed by the delta and b chains.

Its subcellular location is the cell inner membrane. F(1)F(0) ATP synthase produces ATP from ADP in the presence of a proton or sodium gradient. F-type ATPases consist of two structural domains, F(1) containing the extramembraneous catalytic core and F(0) containing the membrane proton channel, linked together by a central stalk and a peripheral stalk. During catalysis, ATP synthesis in the catalytic domain of F(1) is coupled via a rotary mechanism of the central stalk subunits to proton translocation. Its function is as follows. Component of the F(0) channel, it forms part of the peripheral stalk, linking F(1) to F(0). In Dechloromonas aromatica (strain RCB), this protein is ATP synthase subunit b.